The sequence spans 443 residues: Protein Z-dependent protease inhibitor (443 aa).

The N-terminal stretch at 1-23 (MKVVPSLLLSVLLAQVWLVPGLA) is a signal peptide. A disordered region spans residues 24-66 (PSPQSPETPAPQNQTSRVVQAPREEEEDEQEASEEKAGDEEKA). Residue N36 is glycosylated (N-linked (GlcNAc...) asparagine). At S56 the chain carries Phosphoserine. Residues 56–66 (SEEKAGDEEKA) show a composition bias toward basic and acidic residues. Residues 136-153 (TKPGLLPSLFKGLRETLS) are heparin-binding. 2 N-linked (GlcNAc...) asparagine glycosylation sites follow: N180 and N295.

This sequence belongs to the serpin family. Post-translationally, phosphorylated by FAM20C in the extracellular medium.

The protein localises to the secreted. In terms of biological role, inhibits activity of the coagulation protease factor Xa in the presence of PROZ, calcium and phospholipids. Also inhibits factor XIa in the absence of cofactors. This is Protein Z-dependent protease inhibitor (SERPINA10) from Pongo abelii (Sumatran orangutan).